Reading from the N-terminus, the 335-residue chain is MSPKISLTRYLVEQQRIDGHIPPELRLLIEVVARACKSISQAVNKGALGDVMGSAGSENVQGEIQKKLDIIANEVLIEANEWGGHLAAMASEEMDDIYVVPNRYPQGEYLLMFDPLDGSSNIDVNVSIGTIFSVLKKSEDDRGVEESDFLQAGNQQVAAGYCVYGPQTTLVLTVGDGVAMFTLDREQGSFVLTEENVTIPDDTQEFAINMSNMRHWDEPVKRYINECLEGKDGPRGKDFNMRWIASMVADVHRILCRGGVFLYPWDKREPEKAGKLRLMYEANPMSWLIEQAGGAATNGKQRILDIQPTKLHERVSVILGSKNEVERLTAYHSGL.

Glu-92, Asp-114, Leu-116, and Asp-117 together coordinate Mg(2+). Residues 117-120, Asn-209, and Lys-275 contribute to the substrate site; that span reads DGSS. Glu-281 is a Mg(2+) binding site.

The protein belongs to the FBPase class 1 family. Homotetramer. Requires Mg(2+) as cofactor.

The protein resides in the cytoplasm. It catalyses the reaction beta-D-fructose 1,6-bisphosphate + H2O = beta-D-fructose 6-phosphate + phosphate. Its pathway is carbohydrate biosynthesis; gluconeogenesis. The protein is Fructose-1,6-bisphosphatase class 1 1 of Polaromonas naphthalenivorans (strain CJ2).